The primary structure comprises 189 residues: NADH-quinone oxidoreductase subunit B (189 aa).

The [4Fe-4S] cluster site is built by Cys39, Cys40, Cys104, and Cys135.

It belongs to the complex I 20 kDa subunit family. As to quaternary structure, NDH-1 is composed of 14 different subunits. Subunits NuoB, C, D, E, F, and G constitute the peripheral sector of the complex. [4Fe-4S] cluster is required as a cofactor.

It localises to the cell inner membrane. The enzyme catalyses a quinone + NADH + 5 H(+)(in) = a quinol + NAD(+) + 4 H(+)(out). Functionally, NDH-1 shuttles electrons from NADH, via FMN and iron-sulfur (Fe-S) centers, to quinones in the respiratory chain. The immediate electron acceptor for the enzyme in this species is believed to be a menaquinone. Couples the redox reaction to proton translocation (for every two electrons transferred, four hydrogen ions are translocated across the cytoplasmic membrane), and thus conserves the redox energy in a proton gradient. This is NADH-quinone oxidoreductase subunit B from Chlorobium limicola (strain DSM 245 / NBRC 103803 / 6330).